A 455-amino-acid polypeptide reads, in one-letter code: 1,4-beta-D-glucan cellobiohydrolase C (455 aa).

The first 19 residues, 1-19 (MHYSASGLALAFLLPAIQA), serve as a signal peptide directing secretion. Residues 20–55 (QQTLYGQCGGSGWTGATSCVAGAACSTLNQWYAQCL) form the CBM1 domain. 2 cysteine pairs are disulfide-bonded: Cys27-Cys44 and Cys38-Cys54. The thr-rich linker stretch occupies residues 59 to 92 (TTTSTTLTTTTSSVTTTSNPGSTTTTSSVTVTAT). The disordered stretch occupies residues 66–86 (TTTTSSVTTTSNPGSTTTTSS). The catalytic stretch occupies residues 93 to 450 (ASGNPFSGYQ…QAYFVQLLQN (358 aa)). The active site involves Asp185. 2 disulfides stabilise this stretch: Cys186–Cys245 and Cys377–Cys424. Asp231 (proton donor) is an active-site residue. Residue Asp410 is the Nucleophile of the active site.

Belongs to the glycosyl hydrolase 6 (cellulase B) family.

The protein localises to the secreted. It catalyses the reaction Hydrolysis of (1-&gt;4)-beta-D-glucosidic linkages in cellulose and cellotetraose, releasing cellobiose from the non-reducing ends of the chains.. Functionally, the biological conversion of cellulose to glucose generally requires three types of hydrolytic enzymes: (1) Endoglucanases which cut internal beta-1,4-glucosidic bonds; (2) Exocellobiohydrolases that cut the disaccharide cellobiose from the non-reducing end of the cellulose polymer chain; (3) Beta-1,4-glucosidases which hydrolyze the cellobiose and other short cello-oligosaccharides to glucose. Active against carboxymethylcellulose, beta-glucan and lichenan. The chain is 1,4-beta-D-glucan cellobiohydrolase C (cbhC) from Emericella nidulans (strain FGSC A4 / ATCC 38163 / CBS 112.46 / NRRL 194 / M139) (Aspergillus nidulans).